A 272-amino-acid chain; its full sequence is uncharacterized protein (272 aa).

This is an uncharacterized protein from Bacillus subtilis (strain 168).